A 590-amino-acid polypeptide reads, in one-letter code: Leishmanolysin (590 aa).

The first 39 residues, 1-39, serve as a signal peptide directing secretion; it reads MSVDSSSTHRHRSVAARLVRLAAAGAAVIAAVGTAAAWA. A propeptide spans 40–87 (activation peptide); the sequence is HAGAVQHRCIHDAMQARVRQSVARHHTAPGAVSAVGLSYVTLGAAPTV. Disulfide bonds link cysteine 112/cysteine 129 and cysteine 178/cysteine 217. Histidine 251 contributes to the Zn(2+) binding site. Residue glutamate 252 is part of the active site. Histidine 255 lines the Zn(2+) pocket. Residue asparagine 287 is glycosylated (N-linked (GlcNAc...) asparagine). 7 disulfides stabilise this stretch: cysteine 301-cysteine 373, cysteine 380-cysteine 443, cysteine 393-cysteine 412, cysteine 402-cysteine 477, cysteine 454-cysteine 498, cysteine 503-cysteine 553, and cysteine 523-cysteine 546. Zn(2+) is bound at residue histidine 321. Asparagine 565 carries GPI-anchor amidated asparagine lipidation. The propeptide at 566–590 is removed in mature form; the sequence is AAAGRRGPRAAATALLVAALLAVAL.

This sequence belongs to the peptidase M8 family. Zn(2+) serves as cofactor.

It is found in the cell membrane. The catalysed reaction is Preference for hydrophobic residues at P1 and P1' and basic residues at P2' and P3'. A model nonapeptide is cleaved at -Ala-Tyr-|-Leu-Lys-Lys-.. Has an integral role during the infection of macrophages in the mammalian host. The chain is Leishmanolysin (gp63) from Leishmania donovani.